The chain runs to 127 residues: Modulator protein MzrA (127 aa).

Residues 1–9 (MQLPRVTLR) are Cytoplasmic-facing. A helical transmembrane segment spans residues 10 to 32 (QMTWTTSAIVLLGITLLLWSAFR). The Periplasmic portion of the chain corresponds to 33 to 127 (HQESTLAIRA…LLRDTSHRFG (95 aa)).

The protein belongs to the MzrA family. Interacts with EnvZ.

The protein resides in the cell inner membrane. Functionally, modulates the activity of the EnvZ/OmpR two-component regulatory system, probably by directly modulating EnvZ enzymatic activity and increasing stability of phosphorylated OmpR. The chain is Modulator protein MzrA from Escherichia fergusonii (strain ATCC 35469 / DSM 13698 / CCUG 18766 / IAM 14443 / JCM 21226 / LMG 7866 / NBRC 102419 / NCTC 12128 / CDC 0568-73).